Consider the following 92-residue polypeptide: Small ribosomal subunit protein bS18 (92 aa).

The protein belongs to the bacterial ribosomal protein bS18 family. Part of the 30S ribosomal subunit. Forms a tight heterodimer with protein bS6.

Functionally, binds as a heterodimer with protein bS6 to the central domain of the 16S rRNA, where it helps stabilize the platform of the 30S subunit. In Ralstonia nicotianae (strain ATCC BAA-1114 / GMI1000) (Ralstonia solanacearum), this protein is Small ribosomal subunit protein bS18.